Consider the following 398-residue polypeptide: Unsaturated chondroitin disaccharide hydrolase (398 aa).

Catalysis depends on Asp115, which acts as the Nucleophile. Substrate-binding residues include Asp115, Asp175, Gly233, Thr235, Arg247, Trp251, Ser365, and Ser368. Residue Asp175 is the Proton donor of the active site.

Belongs to the glycosyl hydrolase 88 family. As to quaternary structure, monomer.

The catalysed reaction is beta-D-4-deoxy-Delta(4)-GlcpA-(1-&gt;3)-beta-D-GalpNAc6S + H2O = N-acetyl-beta-D-galactosamine 6-sulfate + 5-dehydro-4-deoxy-D-glucuronate. Catalyzes the hydrolysis of unsaturated hyaluronate and chondroitin disaccharides. Also degrades unsaturated heparin disaccharides. Releases 4-deoxy-4,5-didehydro D-glucuronic acid or 4-deoxy-4,5-didehydro L-iduronic acid from chondroitin disaccharides, hyaluronan disaccharides and heparin disaccharides and cleaves both glycosidic (1-&gt;3) and (1-&gt;4) bonds. Prefers sulfated glycosaminoglycans compared to unsulfated glycosaminoglycans. Probably required for mammalian cells invasion through the degradation of extracellular sulfated glycosaminoglycans such as chondroitin and hyaluronan. The sequence is that of Unsaturated chondroitin disaccharide hydrolase from Streptococcus agalactiae serotype III (strain NEM316).